Here is a 544-residue protein sequence, read N- to C-terminus: Protein RDR1 (544 aa).

A DNA-binding region (zn(2)-C6 fungal-type) is located at residues 14 to 40; sequence CETCRELKRKCDGNQPCGACVRFEYDC. The interval 50 to 71 is disordered; sequence KRRKTVEQDKEAPLPSPPVHVD.

It is found in the nucleus. Functionally, may act as a transcriptional repressor of multidrug resistance genes. The sequence is that of Protein RDR1 (RDR1) from Gibberella zeae (strain ATCC MYA-4620 / CBS 123657 / FGSC 9075 / NRRL 31084 / PH-1) (Wheat head blight fungus).